Reading from the N-terminus, the 1038-residue chain is Translation initiation factor IF-2 (1038 aa).

A disordered region spans residues 48 to 426 (DALQGPGGNA…RQRRQEYEAM (379 aa)). Low complexity predominate over residues 58-87 (GKSAAKPGAPRKAAPAKPAAPSPAAAARPA). A compositionally biased stretch (pro residues) spans 88-99 (APKPGAPAPKPA). Residues 100-114 (EAPSSTPAAPSAPSA) show a composition bias toward low complexity. Over residues 115–125 (GPRPGPKPAPK) the composition is skewed to pro residues. Residues 126–141 (AAPVTPVPAAEFSAPA) show a composition bias toward low complexity. Residues 142 to 153 (PAQPAAPQPQAP) show a composition bias toward pro residues. A compositionally biased stretch (basic and acidic residues) spans 177–199 (DGGRDGGQRDGGRGGERGGDRPA). Positions 200 to 219 (RPAGQGAPRPGGARPAGPRP) are enriched in low complexity. A compositionally biased stretch (gly residues) spans 261-277 (SGPGGAPRPQGGQGQGG). Residues 299 to 315 (GNRPNPGMMPQRPAAGP) are compositionally biased toward low complexity. Over residues 319-406 (PGGGGRGPGG…GTQGAFGRPG (88 aa)) the composition is skewed to gly residues. Positions 410–419 (RRGRKSKRQR) are enriched in basic residues. Residues 531–703 (SRPPVVTVMG…VVLTADASLD (173 aa)) form the tr-type G domain. The segment at 540–547 (GHVDHGKT) is G1. Residue 540–547 (GHVDHGKT) participates in GTP binding. Positions 565–569 (GITQH) are G2. The interval 590-593 (DTPG) is G3. Residues 590-594 (DTPGH) and 644-647 (NKID) contribute to the GTP site. A G4 region spans residues 644–647 (NKID). A G5 region spans residues 680–682 (SAK).

It belongs to the TRAFAC class translation factor GTPase superfamily. Classic translation factor GTPase family. IF-2 subfamily.

It localises to the cytoplasm. Functionally, one of the essential components for the initiation of protein synthesis. Protects formylmethionyl-tRNA from spontaneous hydrolysis and promotes its binding to the 30S ribosomal subunits. Also involved in the hydrolysis of GTP during the formation of the 70S ribosomal complex. This is Translation initiation factor IF-2 from Streptomyces griseus subsp. griseus (strain JCM 4626 / CBS 651.72 / NBRC 13350 / KCC S-0626 / ISP 5235).